A 197-amino-acid polypeptide reads, in one-letter code: Phosphoheptose isomerase (197 aa).

An SIS domain is found at Cys-40–Gln-197. Asn-55 to Gly-57 provides a ligand contact to substrate. Zn(2+)-binding residues include His-64 and Glu-68. Residues Glu-68, Asn-97–Asp-98, Ser-123–Ser-125, Ser-128, and Gln-175 each bind substrate. Positions 175 and 183 each coordinate Zn(2+).

Belongs to the SIS family. GmhA subfamily. In terms of assembly, homotetramer. Zn(2+) is required as a cofactor.

The protein resides in the cytoplasm. It catalyses the reaction 2 D-sedoheptulose 7-phosphate = D-glycero-alpha-D-manno-heptose 7-phosphate + D-glycero-beta-D-manno-heptose 7-phosphate. It functions in the pathway carbohydrate biosynthesis; D-glycero-D-manno-heptose 7-phosphate biosynthesis; D-glycero-alpha-D-manno-heptose 7-phosphate and D-glycero-beta-D-manno-heptose 7-phosphate from sedoheptulose 7-phosphate: step 1/1. It participates in capsule biogenesis; capsule polysaccharide biosynthesis. Functionally, catalyzes the isomerization of sedoheptulose 7-phosphate in D-glycero-D-manno-heptose 7-phosphate. The polypeptide is Phosphoheptose isomerase (Burkholderia mallei (strain ATCC 23344)).